The following is a 515-amino-acid chain: Peroxisomal catalase A (515 aa).

Ser2 is subject to N-acetylserine. Residues His70 and Asn143 contribute to the active site. Tyr355 contributes to the heme binding site. The Microbody targeting signal signature appears at 513–515 (SKF).

The protein belongs to the catalase family. In terms of assembly, homotetramer. Heme serves as cofactor.

The protein resides in the peroxisome matrix. The enzyme catalyses 2 H2O2 = O2 + 2 H2O. In terms of biological role, catalyzes the degradation of hydrogen peroxide (H(2)O(2)) generated by peroxisomal oxidases to water and oxygen, thereby protecting cells from the toxic effects of hydrogen peroxide. The polypeptide is Peroxisomal catalase A (CTA1) (Saccharomyces cerevisiae (strain ATCC 204508 / S288c) (Baker's yeast)).